Reading from the N-terminus, the 95-residue chain is Class I hydrophobin 13 (95 aa).

4 disulfide bridges follow: Cys14–Cys74, Cys21–Cys68, Cys22–Cys55, and Cys75–Cys88. N-linked (GlcNAc...) asparagine glycans are attached at residues Asn23 and Asn77.

This sequence belongs to the fungal hydrophobin family. As to quaternary structure, self-assembles to form functional amyloid fibrils called rodlets. Self-assembly into fibrillar rodlets occurs spontaneously at hydrophobic:hydrophilic interfaces and the rodlets further associate laterally to form amphipathic monolayers.

The protein localises to the secreted. It localises to the cell wall. In terms of biological role, aerial growth, conidiation, and dispersal of filamentous fungi in the environment rely upon a capability of their secreting small amphipathic proteins called hydrophobins (HPBs) with low sequence identity. Class I can self-assemble into an outermost layer of rodlet bundles on aerial cell surfaces, conferring cellular hydrophobicity that supports fungal growth, development and dispersal; whereas Class II form highly ordered films at water-air interfaces through intermolecular interactions but contribute nothing to the rodlet structure. This chain is Class I hydrophobin 13, found in Pleurotus ostreatus (strain PC15) (Oyster mushroom).